The sequence spans 411 residues: Multidrug resistance protein MdtG (411 aa).

The next 10 helical transmembrane spans lie at 14-34, 56-76, 89-109, 113-133, 144-164, 171-191, 219-239, 254-274, 288-308, and 376-396; these read LFVA…IMPF, LVFS…GGLA, ALGM…WQFL, AVLG…ATQV, TLST…GLLA, PVFY…LLYV, ILSL…IAPI, LAFV…MSAP, ILVF…FVQT, and AVFC…WWCL.

This sequence belongs to the major facilitator superfamily. DHA1 family. MdtG (TC 2.A.1.2.20) subfamily.

It is found in the cell inner membrane. This is Multidrug resistance protein MdtG from Serratia proteamaculans (strain 568).